The primary structure comprises 298 residues: Protein FAM221A (298 aa).

Positions serine 241–serine 257 are enriched in polar residues. The segment at serine 241–glutamate 263 is disordered.

It belongs to the FAM221 family.

The protein is Protein FAM221A (FAM221A) of Homo sapiens (Human).